The primary structure comprises 367 residues: Phosphoribosylaminoimidazole-succinocarboxamide synthase (367 aa).

Belongs to the SAICAR synthetase family.

It catalyses the reaction 5-amino-1-(5-phospho-D-ribosyl)imidazole-4-carboxylate + L-aspartate + ATP = (2S)-2-[5-amino-1-(5-phospho-beta-D-ribosyl)imidazole-4-carboxamido]succinate + ADP + phosphate + 2 H(+). It participates in purine metabolism; IMP biosynthesis via de novo pathway; 5-amino-1-(5-phospho-D-ribosyl)imidazole-4-carboxamide from 5-amino-1-(5-phospho-D-ribosyl)imidazole-4-carboxylate: step 1/2. The protein is Phosphoribosylaminoimidazole-succinocarboxamide synthase of Shewanella halifaxensis (strain HAW-EB4).